We begin with the raw amino-acid sequence, 342 residues long: Flavanone 3-dioxygenase 2 (342 aa).

A Fe2OG dioxygenase domain is found at 193–293; the sequence is QEQHMAVNYY…RMSVASFLCP (101 aa). Residues histidine 217, aspartate 219, and histidine 274 each contribute to the Fe cation site. 2-oxoglutarate is bound at residue arginine 284.

It belongs to the iron/ascorbate-dependent oxidoreductase family. The cofactor is Fe(2+). It depends on L-ascorbate as a cofactor. In terms of tissue distribution, expressed in roots, leaves and stems. Expressed at low levels in seeds.

The enzyme catalyses a (2S)-flavan-4-one + 2-oxoglutarate + O2 = a (2R,3R)-dihydroflavonol + succinate + CO2. Its pathway is secondary metabolite biosynthesis; flavonoid biosynthesis. Its function is as follows. Catalyzes the 3-beta-hydroxylation of 2S-flavanones to 2R,3R-dihydroflavonols which are intermediates in the biosynthesis of flavonols, anthocyanidins, catechins and proanthocyanidins in plants. Converts (2S)-eriodictyol to (+)-taxifolin and (2S)-naringenin to (+)-(2R/3R)-dihydrokaempferol in vitro. The protein is Flavanone 3-dioxygenase 2 of Oryza sativa subsp. japonica (Rice).